The primary structure comprises 396 residues: Probable sugar efflux transporter (396 aa).

12 helical membrane-spanning segments follow: residues 15–35 (VVTL…PVGL), 50–70 (VGIM…PFML), 81–101 (LICL…AWNF), 103–123 (VLVI…SITA), 136–156 (AQAL…GLPI), 169–189 (TFFA…KLLP), 209–229 (PALM…YTAY), 246–266 (FATV…LVFG), 275–295 (SLVS…LPAA), 301–321 (LAIL…GMQV), 333–353 (VAMA…ALVG), and 364–384 (AIGY…VLIF).

Belongs to the major facilitator superfamily. SotB (TC 2.A.1.2) family.

It localises to the cell inner membrane. In terms of biological role, involved in the efflux of sugars. The physiological role may be the reduction of the intracellular concentration of toxic sugars or sugar metabolites. The chain is Probable sugar efflux transporter from Salmonella paratyphi C (strain RKS4594).